We begin with the raw amino-acid sequence, 62 residues long: Photosystem II reaction center protein Z (62 aa).

2 helical membrane passes run 8-28 (AVFALIVTSSVLVISVPLVFA) and 41-61 (FSGTSLWIGLVFLVAILNSLI).

It belongs to the PsbZ family. PSII is composed of 1 copy each of membrane proteins PsbA, PsbB, PsbC, PsbD, PsbE, PsbF, PsbH, PsbI, PsbJ, PsbK, PsbL, PsbM, PsbT, PsbY, PsbZ, Psb30/Ycf12, at least 3 peripheral proteins of the oxygen-evolving complex and a large number of cofactors. It forms dimeric complexes.

Its subcellular location is the plastid. It is found in the chloroplast thylakoid membrane. Functionally, may control the interaction of photosystem II (PSII) cores with the light-harvesting antenna, regulates electron flow through the 2 photosystem reaction centers. PSII is a light-driven water plastoquinone oxidoreductase, using light energy to abstract electrons from H(2)O, generating a proton gradient subsequently used for ATP formation. The polypeptide is Photosystem II reaction center protein Z (Oryza nivara (Indian wild rice)).